The chain runs to 363 residues: NAD(P)H-quinone oxidoreductase subunit 1, chloroplastic (363 aa).

Helical transmembrane passes span 30-50, 98-118, 129-149, 248-268, 300-320, and 336-356; these read LVPI…IVWL, FSIG…IIPF, IGVF…LMSG, YSGI…LVSS, VFGT…FLFI, and LLNL…LLTT.

It belongs to the complex I subunit 1 family. In terms of assembly, NDH is composed of at least 16 different subunits, 5 of which are encoded in the nucleus.

The protein resides in the plastid. It localises to the chloroplast thylakoid membrane. It carries out the reaction a plastoquinone + NADH + (n+1) H(+)(in) = a plastoquinol + NAD(+) + n H(+)(out). It catalyses the reaction a plastoquinone + NADPH + (n+1) H(+)(in) = a plastoquinol + NADP(+) + n H(+)(out). In terms of biological role, NDH shuttles electrons from NAD(P)H:plastoquinone, via FMN and iron-sulfur (Fe-S) centers, to quinones in the photosynthetic chain and possibly in a chloroplast respiratory chain. The immediate electron acceptor for the enzyme in this species is believed to be plastoquinone. Couples the redox reaction to proton translocation, and thus conserves the redox energy in a proton gradient. The protein is NAD(P)H-quinone oxidoreductase subunit 1, chloroplastic of Vitis vinifera (Grape).